A 286-amino-acid polypeptide reads, in one-letter code: Pantothenate synthetase (286 aa).

Residue 30–37 (MGFLHEGH) participates in ATP binding. His-37 functions as the Proton donor in the catalytic mechanism. Gln-61 lines the (R)-pantoate pocket. Gln-61 is a beta-alanine binding site. ATP is bound at residue 147–150 (GLKD). Gln-153 is a (R)-pantoate binding site. Residues Val-176 and 184–187 (KSSR) contribute to the ATP site.

It belongs to the pantothenate synthetase family. In terms of assembly, homodimer.

The protein localises to the cytoplasm. It catalyses the reaction (R)-pantoate + beta-alanine + ATP = (R)-pantothenate + AMP + diphosphate + H(+). It functions in the pathway cofactor biosynthesis; (R)-pantothenate biosynthesis; (R)-pantothenate from (R)-pantoate and beta-alanine: step 1/1. In terms of biological role, catalyzes the condensation of pantoate with beta-alanine in an ATP-dependent reaction via a pantoyl-adenylate intermediate. The polypeptide is Pantothenate synthetase (Bacillus subtilis (strain 168)).